We begin with the raw amino-acid sequence, 262 residues long: Late embryogenesis abundant protein 31 (262 aa).

The Nuclear localization signal (NLS) motif lies at 6–10 (QPKRP). SMP domains follow at residues 14 to 68 (VTYG…ANKR), 136 to 192 (ITIG…NHNA), and 201 to 260 (IKLI…NERA).

This sequence belongs to the LEA type SMP family. As to expression, embryo specific, only in dry mature seeds.

Its subcellular location is the nucleus. It is found in the nucleolus. It localises to the cytoplasm. Functionally, LEA proteins are late embryonic proteins abundant in higher plant seed embryos. The function of those proteins is not known. Promotes germination rate. Enhances cation toxicity (e.g. lithium ion) and osmotic stress (e.g. NaCl and sorbitol) tolerance during germination and in seedlings. In Arabidopsis thaliana (Mouse-ear cress), this protein is Late embryogenesis abundant protein 31.